We begin with the raw amino-acid sequence, 188 residues long: Elongation factor P (188 aa).

The residue at position 34 (lysine 34) is an N6-(3,6-diaminohexanoyl)-5-hydroxylysine.

The protein belongs to the elongation factor P family. Post-translationally, may be beta-lysylated on the epsilon-amino group of Lys-34 by the combined action of EpmA and EpmB, and then hydroxylated on the C5 position of the same residue by EpmC (if this protein is present). Lysylation is critical for the stimulatory effect of EF-P on peptide-bond formation. The lysylation moiety may extend toward the peptidyltransferase center and stabilize the terminal 3-CCA end of the tRNA. Hydroxylation of the C5 position on Lys-34 may allow additional potential stabilizing hydrogen-bond interactions with the P-tRNA.

It localises to the cytoplasm. Its pathway is protein biosynthesis; polypeptide chain elongation. Its function is as follows. Involved in peptide bond synthesis. Alleviates ribosome stalling that occurs when 3 or more consecutive Pro residues or the sequence PPG is present in a protein, possibly by augmenting the peptidyl transferase activity of the ribosome. Modification of Lys-34 is required for alleviation. The chain is Elongation factor P from Hamiltonella defensa subsp. Acyrthosiphon pisum (strain 5AT).